We begin with the raw amino-acid sequence, 307 residues long: Follistatin-related protein 1 (307 aa).

A signal peptide spans Met1–Ala19. The Follistatin-like domain maps to Ile29 to Leu52. 5 disulfides stabilise this stretch: Cys30/Cys41, Cys35/Cys51, Cys53/Cys83, Cys57/Cys76, and Cys65/Cys97. Positions Gly47 to Glu99 constitute a Kazal-like domain. Asn143 carries an N-linked (GlcNAc...) asparagine glycan. One can recognise an EF-hand 1 domain in the interval Asn143 to Ala177. Position 164 is a phosphoserine (Ser164). Residues Asn174 and Asn179 are each glycosylated (N-linked (GlcNAc...) asparagine). The EF-hand 2 domain occupies Leu192–Pro227. The VWFC domain maps to Cys232–Val286.

As to quaternary structure, homodimer. Interacts with SCN10A. Interacts with DIP2A; DIP2A may act as a cell surface receptor for FSTL1. Interacts with BMP4. Interacts with CD14; this interaction promotes TL4-mediated signaling cascade.

Its subcellular location is the secreted. Functionally, secreted glycoprotein that is involved in various physiological processes, such as angiogenesis, regulation of the immune response, cell proliferation and differentiation. Plays a role in the development of the central nervous system, skeletal system, lungs, and ureter. Promotes endothelial cell survival, migration and differentiation into network structures in an AKT-dependent manner. Also promotes survival of cardiac myocytes. Initiates various signaling cascades by activating different receptors on the cell surface such as DIP2A, TLR4 or BMP receptors. This is Follistatin-related protein 1 (FSTL1) from Bos taurus (Bovine).